A 448-amino-acid polypeptide reads, in one-letter code: Glutamyl-tRNA reductase 2 (448 aa).

Substrate contacts are provided by residues 50 to 53 (TCER), S109, 114 to 116 (ESD), and Q120. The active-site Nucleophile is the C51. 190–195 (GTGQVA) contributes to the NADP(+) binding site. The segment at 423 to 448 (DQAVPAYSPQPIGNTSNAAASATPRR) is disordered. Residues 433–442 (PIGNTSNAAA) show a composition bias toward polar residues.

This sequence belongs to the glutamyl-tRNA reductase family. Homodimer.

The enzyme catalyses (S)-4-amino-5-oxopentanoate + tRNA(Glu) + NADP(+) = L-glutamyl-tRNA(Glu) + NADPH + H(+). It participates in porphyrin-containing compound metabolism; protoporphyrin-IX biosynthesis; 5-aminolevulinate from L-glutamyl-tRNA(Glu): step 1/2. Its function is as follows. Catalyzes the NADPH-dependent reduction of glutamyl-tRNA(Glu) to glutamate 1-semialdehyde (GSA). The sequence is that of Glutamyl-tRNA reductase 2 from Nocardioides sp. (strain ATCC BAA-499 / JS614).